We begin with the raw amino-acid sequence, 141 residues long: Ribonuclease P protein component (141 aa).

Disordered regions lie at residues 37–56 (RTEE…VGFT) and 114–141 (RRIT…VNGK). Positions 114–124 (RRITAKGERRS) are enriched in basic and acidic residues.

Belongs to the RnpA family. In terms of assembly, consists of a catalytic RNA component (M1 or rnpB) and a protein subunit.

It carries out the reaction Endonucleolytic cleavage of RNA, removing 5'-extranucleotides from tRNA precursor.. In terms of biological role, RNaseP catalyzes the removal of the 5'-leader sequence from pre-tRNA to produce the mature 5'-terminus. It can also cleave other RNA substrates such as 4.5S RNA. The protein component plays an auxiliary but essential role in vivo by binding to the 5'-leader sequence and broadening the substrate specificity of the ribozyme. In Brucella melitensis biotype 2 (strain ATCC 23457), this protein is Ribonuclease P protein component.